Here is a 178-residue protein sequence, read N- to C-terminus: Large ribosomal subunit protein bL25 (178 aa).

This sequence belongs to the bacterial ribosomal protein bL25 family. CTC subfamily. In terms of assembly, part of the 50S ribosomal subunit; part of the 5S rRNA/L5/L18/L25 subcomplex. Contacts the 5S rRNA. Binds to the 5S rRNA independently of L5 and L18.

Functionally, this is one of the proteins that binds to the 5S RNA in the ribosome where it forms part of the central protuberance. The chain is Large ribosomal subunit protein bL25 from Campylobacter hominis (strain ATCC BAA-381 / DSM 21671 / CCUG 45161 / LMG 19568 / NCTC 13146 / CH001A).